The sequence spans 155 residues: Cyanate hydratase (155 aa).

Residues R92, E95, and S118 contribute to the active site.

The protein belongs to the cyanase family.

It carries out the reaction cyanate + hydrogencarbonate + 3 H(+) = NH4(+) + 2 CO2. Catalyzes the reaction of cyanate with bicarbonate to produce ammonia and carbon dioxide. The polypeptide is Cyanate hydratase (Mycobacterium avium (strain 104)).